The chain runs to 191 residues: MVSFEDLLNYSLNEEKNKITEEFKKILSEMNQIIDEAYAEVYREYSAKITDLVNKNNDRIRGEIAKMEIENKRLISKEMDYWIENVKENAKKSLYEFVKTDNYKKGLESIISREVSDGSIIYCSPSDQKSISDIIKKKKISCKIVVDEKIVGGIKIYYPDKSLSKDFTLETILNQVFDDIRDKIAQILFGE.

The protein belongs to the V-ATPase E subunit family. Has multiple subunits with at least A(3), B(3), C, D, E, F, H, I and proteolipid K(x). In terms of processing, the N-terminus is blocked.

The protein resides in the cell membrane. Component of the A-type ATP synthase that produces ATP from ADP in the presence of a proton gradient across the membrane. This Sulfurisphaera tokodaii (strain DSM 16993 / JCM 10545 / NBRC 100140 / 7) (Sulfolobus tokodaii) protein is A-type ATP synthase subunit E.